Consider the following 375-residue polypeptide: Aminomethyltransferase (375 aa).

It belongs to the GcvT family. The glycine cleavage system is composed of four proteins: P, T, L and H.

The enzyme catalyses N(6)-[(R)-S(8)-aminomethyldihydrolipoyl]-L-lysyl-[protein] + (6S)-5,6,7,8-tetrahydrofolate = N(6)-[(R)-dihydrolipoyl]-L-lysyl-[protein] + (6R)-5,10-methylene-5,6,7,8-tetrahydrofolate + NH4(+). Its function is as follows. The glycine cleavage system catalyzes the degradation of glycine. The sequence is that of Aminomethyltransferase from Cupriavidus taiwanensis (strain DSM 17343 / BCRC 17206 / CCUG 44338 / CIP 107171 / LMG 19424 / R1) (Ralstonia taiwanensis (strain LMG 19424)).